Reading from the N-terminus, the 323-residue chain is Cyclin-H (323 aa).

S5 carries the phosphoserine; by CDK8 modification. S132 is modified (phosphoserine). The interval 296-323 (GYEDDDYVSKKPKQEEEEWTDDDLVDAL) is disordered. Residue S304 is modified to Phosphoserine; by CDK8. Acidic residues predominate over residues 310–323 (EEEEWTDDDLVDAL). At T315 the chain carries Phosphothreonine.

This sequence belongs to the cyclin family. Cyclin C subfamily. As to quaternary structure, associates primarily with CDK7 and MAT1 to form the CAK complex. CAK can further associate with the core-TFIIH to form the TFIIH basal transcription factor.

It localises to the nucleus. In terms of biological role, regulates CDK7, the catalytic subunit of the CDK-activating kinase (CAK) enzymatic complex. CAK activates the cyclin-associated kinases CDK1, CDK2, CDK4 and CDK6 by threonine phosphorylation. CAK complexed to the core-TFIIH basal transcription factor activates RNA polymerase II by serine phosphorylation of the repetitive C-terminal domain (CTD) of its large subunit (POLR2A), allowing its escape from the promoter and elongation of the transcripts. Involved in cell cycle control and in RNA transcription by RNA polymerase II. Its expression and activity are constant throughout the cell cycle. This is Cyclin-H (Ccnh) from Rattus norvegicus (Rat).